Consider the following 349-residue polypeptide: DNA polymerase IV (349 aa).

In terms of domain architecture, UmuC spans 4-185; it reads IIHIDCDCFY…LPVAKLHGVG (182 aa). Asp-8 and Asp-103 together coordinate Mg(2+). Glu-104 is a catalytic residue.

It belongs to the DNA polymerase type-Y family. Monomer. Mg(2+) is required as a cofactor.

It is found in the cytoplasm. The enzyme catalyses DNA(n) + a 2'-deoxyribonucleoside 5'-triphosphate = DNA(n+1) + diphosphate. In terms of biological role, poorly processive, error-prone DNA polymerase involved in untargeted mutagenesis. Copies undamaged DNA at stalled replication forks, which arise in vivo from mismatched or misaligned primer ends. These misaligned primers can be extended by PolIV. Exhibits no 3'-5' exonuclease (proofreading) activity. May be involved in translesional synthesis, in conjunction with the beta clamp from PolIII. This chain is DNA polymerase IV, found in Pseudomonas aeruginosa (strain UCBPP-PA14).